The following is a 3470-amino-acid chain: Dynein axonemal heavy chain 5 (3470 aa).

The segment at 1–1938 (MFRIGRRQLW…MIHITDVAFT (1938 aa)) is stem. The tract at residues 899 to 918 (EKVRHENASPNGDTSGGGEG) is disordered. AAA stretches follow at residues 1939–2161 (YQNE…VLRT), 2221–2440 (TAIS…IQNL), 2547–2800 (VYPP…IWQG), and 2913–3167 (LYNE…FRRS). Residues 1977 to 1984 (GPAGTGKT) and 2259 to 2266 (GPSGSGKT) contribute to the ATP site. 2 coiled-coil regions span residues 3207 to 3241 (LKEASESVAALSQELAVKEKELQVANEKADMVLKE) and 3434 to 3468 (HALAMQDLQKAQAELDDKQAELDVVQAEYEQAMTE).

Belongs to the dynein heavy chain family. In terms of assembly, interacts with DNAL1. Consists of at least two heavy chains and a number of intermediate and light chains.

The protein resides in the cytoplasm. Its subcellular location is the cytoskeleton. It is found in the cilium axoneme. In terms of biological role, force generating protein of respiratory cilia. Produces force towards the minus ends of microtubules. Dynein has ATPase activity; the force-producing power stroke is thought to occur on release of ADP. Required for structural and functional integrity of the cilia of ependymal cells lining the brain ventricles. The polypeptide is Dynein axonemal heavy chain 5 (Rattus norvegicus (Rat)).